Here is a 455-residue protein sequence, read N- to C-terminus: Bifunctional protein GlmU (455 aa).

The segment at 1 to 226 (MGLSVVILAA…EFEILGVNDR (226 aa)) is pyrophosphorylase. UDP-N-acetyl-alpha-D-glucosamine is bound by residues 8–11 (LAAG), Lys22, Gln73, 78–79 (GT), 99–101 (YGD), Gly136, Glu151, Asn166, and Asn224. Mg(2+) is bound at residue Asp101. Asn224 is a Mg(2+) binding site. Residues 227 to 247 (TQLASLERVWQRNVAEKIMAK) are linker. The N-acetyltransferase stretch occupies residues 248–455 (GVSIADPNRF…WQRSVKKTDK (208 aa)). The UDP-N-acetyl-alpha-D-glucosamine site is built by Arg330 and Lys348. The active-site Proton acceptor is His360. 2 residues coordinate UDP-N-acetyl-alpha-D-glucosamine: Tyr363 and Asn374. Acetyl-CoA-binding positions include Ala377, 383–384 (NY), Ser402, Ala420, and Arg437.

The protein in the N-terminal section; belongs to the N-acetylglucosamine-1-phosphate uridyltransferase family. This sequence in the C-terminal section; belongs to the transferase hexapeptide repeat family. As to quaternary structure, homotrimer. The cofactor is Mg(2+).

The protein resides in the cytoplasm. It carries out the reaction alpha-D-glucosamine 1-phosphate + acetyl-CoA = N-acetyl-alpha-D-glucosamine 1-phosphate + CoA + H(+). The enzyme catalyses N-acetyl-alpha-D-glucosamine 1-phosphate + UTP + H(+) = UDP-N-acetyl-alpha-D-glucosamine + diphosphate. Its pathway is nucleotide-sugar biosynthesis; UDP-N-acetyl-alpha-D-glucosamine biosynthesis; N-acetyl-alpha-D-glucosamine 1-phosphate from alpha-D-glucosamine 6-phosphate (route II): step 2/2. The protein operates within nucleotide-sugar biosynthesis; UDP-N-acetyl-alpha-D-glucosamine biosynthesis; UDP-N-acetyl-alpha-D-glucosamine from N-acetyl-alpha-D-glucosamine 1-phosphate: step 1/1. It functions in the pathway bacterial outer membrane biogenesis; LPS lipid A biosynthesis. In terms of biological role, catalyzes the last two sequential reactions in the de novo biosynthetic pathway for UDP-N-acetylglucosamine (UDP-GlcNAc). The C-terminal domain catalyzes the transfer of acetyl group from acetyl coenzyme A to glucosamine-1-phosphate (GlcN-1-P) to produce N-acetylglucosamine-1-phosphate (GlcNAc-1-P), which is converted into UDP-GlcNAc by the transfer of uridine 5-monophosphate (from uridine 5-triphosphate), a reaction catalyzed by the N-terminal domain. The sequence is that of Bifunctional protein GlmU from Francisella tularensis subsp. tularensis (strain FSC 198).